Here is a 1054-residue protein sequence, read N- to C-terminus: Trehalose synthase complex regulatory subunit TPS3 (1054 aa).

A disordered region spans residues 112–133; the sequence is AANSGIPPANNPVSSGSTAQRP. The span at 122-132 shows a compositional bias: polar residues; it reads NPVSSGSTAQR. Residues Ser-148, Ser-150, and Ser-181 each carry the phosphoserine modification. Disordered stretches follow at residues 155–203 and 223–250; these read ASSI…PVSK and QQQA…SSSN. Over residues 170 to 182 the composition is skewed to polar residues; sequence LSSSLMKNPNLSF. Positions 235–249 are enriched in low complexity; the sequence is SGSTAGDSSIASSSS. The residue at position 265 (Thr-265) is a Phosphothreonine. Phosphoserine is present on residues Ser-267 and Ser-273. The interval 287–778 is glycosyltransferase; it reads KFGGYSNNAK…SNQETSTVFN (492 aa). Position 960 is a phosphoserine (Ser-960).

This sequence in the N-terminal section; belongs to the glycosyltransferase 20 family. The trehalose synthase complex is composed of the two catalytic subunits TPS1 and TPS2 and at least one of the two regulatory subunits TPS3 or TSL1.

It localises to the cytoplasm. Regulatory subunit of the trehalose synthase complex that catalyzes the production of trehalose from glucose-6-phosphate and UDP-glucose in a two step process. May stabilize the trehalose synthase complex. The polypeptide is Trehalose synthase complex regulatory subunit TPS3 (TPS3) (Saccharomyces cerevisiae (strain ATCC 204508 / S288c) (Baker's yeast)).